Reading from the N-terminus, the 442-residue chain is UPF0489 protein C5orf22 (442 aa).

Residues 175–210 (SSAKKPKLALEDSENTASTNCDSSSEGLEKDTATQR) form a disordered region. The segment covering 189–200 (NTASTNCDSSSE) has biased composition (polar residues).

This sequence belongs to the UPF0489 family.

In Homo sapiens (Human), this protein is UPF0489 protein C5orf22 (C5orf22).